The sequence spans 161 residues: Anthrone oxygenase tpcL (161 aa).

A glycan (N-linked (GlcNAc...) asparagine) is linked at N4. 4 consecutive transmembrane segments (helical) span residues V15–V35, I56–Y74, L87–M107, and W136–L155.

It belongs to the anthrone oxygenase family. As to expression, specifically expressed in conidia.

Its subcellular location is the membrane. The enzyme catalyses emodin anthrone + O2 = emodin + H2O + H(+). It participates in secondary metabolite biosynthesis. Anthrone oxygenase; part of the gene cluster that mediates the biosynthesis of trypacidin, a mycotoxin with antiprotozoal activity and that plays a role in the infection process. The pathway begins with the synthesis of atrochrysone thioester by the polyketide synthase (PKS) tpcC. The atrochrysone carboxyl ACP thioesterase tpcB then breaks the thioester bond and releases the atrochrysone carboxylic acid from tpcC. The decarboxylase tpcK converts atrochrysone carboxylic acid to atrochrysone which is further reduced into emodin anthrone. The next step is performed by the emodin anthrone oxygenase tpcL that catalyzes the oxidation of emodinanthrone to emodin. Emodin O-methyltransferase encoded by tpcA catalyzes methylation of the 8-hydroxy group of emodin to form questin. Ring cleavage of questin by questin oxidase tpcI leads to desmethylsulochrin via several intermediates including questin epoxide. Another methylation step catalyzed by tpcM leads to the formation of sulochrin which is further converted to monomethylsulfochrin by tpcH. Finally, the tpcJ catalyzes the conversion of monomethylsulfochrin to trypacidin. Trypacidin is toxic for human pulmonary and bronchial epithelial cells by initiating the intracellular formation of nitric oxide (NO) and hydrogen peroxide (H(2)O(2)), thus triggering host necrotic cell death. The trypacidin pathway is also able to produce endocrocin via a distinct route from the endocrocin Enc pathway. In Aspergillus fumigatus (strain ATCC MYA-4609 / CBS 101355 / FGSC A1100 / Af293) (Neosartorya fumigata), this protein is Anthrone oxygenase tpcL.